The following is a 100-amino-acid chain: Urease subunit gamma (100 aa).

Belongs to the urease gamma subunit family. In terms of assembly, heterotrimer of UreA (gamma), UreB (beta) and UreC (alpha) subunits. Three heterotrimers associate to form the active enzyme.

The protein localises to the cytoplasm. The enzyme catalyses urea + 2 H2O + H(+) = hydrogencarbonate + 2 NH4(+). Its pathway is nitrogen metabolism; urea degradation; CO(2) and NH(3) from urea (urease route): step 1/1. This Staphylococcus epidermidis (strain ATCC 35984 / DSM 28319 / BCRC 17069 / CCUG 31568 / BM 3577 / RP62A) protein is Urease subunit gamma.